The sequence spans 132 residues: Cytidine deaminase (132 aa).

Residues 1–128 (MDRQMLIKEA…ELLPGAFTAE (128 aa)) form the CMP/dCMP-type deaminase domain. Residue 42 to 44 (NIE) participates in substrate binding. Cysteine 53 provides a ligand contact to Zn(2+). Glutamate 55 functions as the Proton donor in the catalytic mechanism. Zn(2+) contacts are provided by cysteine 86 and cysteine 89.

The protein belongs to the cytidine and deoxycytidylate deaminase family. It depends on Zn(2+) as a cofactor.

It carries out the reaction cytidine + H2O + H(+) = uridine + NH4(+). The catalysed reaction is 2'-deoxycytidine + H2O + H(+) = 2'-deoxyuridine + NH4(+). Functionally, this enzyme scavenges exogenous and endogenous cytidine and 2'-deoxycytidine for UMP synthesis. In Halalkalibacterium halodurans (strain ATCC BAA-125 / DSM 18197 / FERM 7344 / JCM 9153 / C-125) (Bacillus halodurans), this protein is Cytidine deaminase (cdd).